Consider the following 100-residue polypeptide: Integration host factor subunit beta (100 aa).

The tract at residues 53 to 100 is disordered; it reads LHHRPPRIGRNPKTGEPVALPGKYVPHFKPGKELRDRVNAGRHNPIQS. Basic and acidic residues predominate over residues 82–91; the sequence is PGKELRDRVN.

Belongs to the bacterial histone-like protein family. As to quaternary structure, heterodimer of an alpha and a beta chain.

Functionally, this protein is one of the two subunits of integration host factor, a specific DNA-binding protein that functions in genetic recombination as well as in transcriptional and translational control. This Alkalilimnicola ehrlichii (strain ATCC BAA-1101 / DSM 17681 / MLHE-1) protein is Integration host factor subunit beta.